The primary structure comprises 181 residues: Large ribosomal subunit protein uL6 (181 aa).

This sequence belongs to the universal ribosomal protein uL6 family. In terms of assembly, part of the 50S ribosomal subunit.

Functionally, this protein binds to the 23S rRNA, and is important in its secondary structure. It is located near the subunit interface in the base of the L7/L12 stalk, and near the tRNA binding site of the peptidyltransferase center. This is Large ribosomal subunit protein uL6 from Desulforudis audaxviator (strain MP104C).